We begin with the raw amino-acid sequence, 993 residues long: Serine/threonine-protein phosphatase 6 regulatory ankyrin repeat subunit B (993 aa).

28 ANK repeats span residues 7-36, 40-69, 73-102, 106-135, 139-168, 172-201, 205-234, 238-267, 271-301, 305-334, 338-367, 371-400, 404-433, 437-466, 470-498, 531-561, 566-595, 599-628, 633-662, 669-698, 702-731, 735-764, 771-800, 803-832, 838-867, 871-901, 905-934, and 941-970; these read CEQP…DVNA, EKRT…RVNA, MWLT…DVNA, NWQT…SVNV, GGRT…NINA, KDRR…EVTC, KGYT…EIDE, YGNT…NVNQ, SGFT…DVNI, DGKS…EIDC, DGNT…DTAK, HSMF…EIDT, FGRT…DFHK, CGRT…NVNE, WGRT…DNSE, EGYN…GFEE, ALKS…DLDI, KGRT…SIFV, TKRT…NPEV, KGQT…NVDA, VGCT…SILC, RGRT…SEED, QGYT…FRKF, NPFT…PSIV, KGRT…QVNA, SGKT…DLTV, DLNT…DESL, and ALQT…CVLA. A disordered region spans residues 974-993; that stretch reads NASRSNGPRSPPGTAVRKEE.

In terms of assembly, protein phosphatase 6 (PP6) holoenzyme is proposed to be a heterotrimeric complex formed by the catalytic subunit, a SAPS domain-containing subunit (PP6R) and an ankyrin repeat-domain containing regulatory subunit (ARS). Interacts with PPP6R1.

Functionally, putative regulatory subunit of protein phosphatase 6 (PP6) that may be involved in the recognition of phosphoprotein substrates. This chain is Serine/threonine-protein phosphatase 6 regulatory ankyrin repeat subunit B (Ankrd44), found in Mus musculus (Mouse).